The chain runs to 343 residues: MSSVKLTEYSHGAGCGCKISPMLLDEILESTQKTSVYPQLLVGNANKDDAAAYDLGNGTSVLSTTDFFMPIVDDAFTFGQIAATNALSDIYAMGGKPLMAISIFGWPIDKLSADVAREVIDGGRSICEDAGIPLAGGHSIDSPEPIFGLAATGLVDNANLMQNDSAKKGCYIFLTKPLGIGILSTAQKQKKIEEGHIDPAIQAMTTLNKVGADLAPLESVVAMTDVTGFGLLGHLSEICEASDISAQVWFEKVPLLPNVEKYRQLGCIPGGARKNFASYGDKISEMTQQQREILCDAQTSGGLLVIVKKDGLEAFKKVTEAAGLTLEPIGETTVKSQHLVEVL.

Residue Cys-15 is part of the active site. Residues Lys-18 and 46–48 (NKD) contribute to the ATP site. Asp-49 is a binding site for Mg(2+). Residues Asp-66, Asp-89, and 137–139 (GHS) contribute to the ATP site. Asp-89 serves as a coordination point for Mg(2+). Asp-225 is a binding site for Mg(2+).

This sequence belongs to the selenophosphate synthase 1 family. Class I subfamily. Homodimer. Requires Mg(2+) as cofactor.

The catalysed reaction is hydrogenselenide + ATP + H2O = selenophosphate + AMP + phosphate + 2 H(+). Its function is as follows. Synthesizes selenophosphate from selenide and ATP. This Sulfurovum sp. (strain NBC37-1) protein is Selenide, water dikinase.